The following is a 116-amino-acid chain: Large ribosomal subunit protein bL19 (116 aa).

This sequence belongs to the bacterial ribosomal protein bL19 family.

Its function is as follows. This protein is located at the 30S-50S ribosomal subunit interface and may play a role in the structure and function of the aminoacyl-tRNA binding site. The polypeptide is Large ribosomal subunit protein bL19 (Pseudomonas fluorescens (strain Pf0-1)).